The chain runs to 92 residues: Defensin-like protein 226 (92 aa).

Positions 1-27 (MKCGVLFMISCLLITFLVLSHVREVES) are cleaved as a signal peptide. Intrachain disulfides connect C33/C92, C43/C71, C51/C86, and C69/C88.

It belongs to the DEFL family.

It localises to the secreted. This chain is Defensin-like protein 226 (SCRL2), found in Arabidopsis thaliana (Mouse-ear cress).